Here is a 208-residue protein sequence, read N- to C-terminus: Small ribosomal subunit protein uS4 (208 aa).

Residues 98–158 (CRLDTVSYRM…EKAKNHLRIK (61 aa)) form the S4 RNA-binding domain.

The protein belongs to the universal ribosomal protein uS4 family. As to quaternary structure, part of the 30S ribosomal subunit. Contacts protein S5. The interaction surface between S4 and S5 is involved in control of translational fidelity.

Functionally, one of the primary rRNA binding proteins, it binds directly to 16S rRNA where it nucleates assembly of the body of the 30S subunit. Its function is as follows. With S5 and S12 plays an important role in translational accuracy. In Nitrosospira multiformis (strain ATCC 25196 / NCIMB 11849 / C 71), this protein is Small ribosomal subunit protein uS4.